The sequence spans 175 residues: PE-PGRS family protein PE_PGRS8 (175 aa).

The 93-residue stretch at 1–93 (MSFVIAAPEA…AGSYAAAEAA (93 aa)) folds into the PE domain.

This sequence belongs to the mycobacterial PE family. PGRS subfamily.

The protein resides in the secreted. It localises to the cell wall. It is found in the cell surface. The sequence is that of PE-PGRS family protein PE_PGRS8 from Mycobacterium tuberculosis (strain ATCC 25618 / H37Rv).